The following is a 251-amino-acid chain: Putative imidazole glycerol phosphate synthase subunit hisF2 (251 aa).

The active site involves Asp130.

This sequence belongs to the HisA/HisF family. As to quaternary structure, heterodimer of HisH and HisF.

Its subcellular location is the cytoplasm. The catalysed reaction is 5-[(5-phospho-1-deoxy-D-ribulos-1-ylimino)methylamino]-1-(5-phospho-beta-D-ribosyl)imidazole-4-carboxamide + L-glutamine = D-erythro-1-(imidazol-4-yl)glycerol 3-phosphate + 5-amino-1-(5-phospho-beta-D-ribosyl)imidazole-4-carboxamide + L-glutamate + H(+). It functions in the pathway amino-acid biosynthesis; L-histidine biosynthesis; L-histidine from 5-phospho-alpha-D-ribose 1-diphosphate: step 5/9. IGPS catalyzes the conversion of PRFAR and glutamine to IGP, AICAR and glutamate. The HisF subunit catalyzes the cyclization activity that produces IGP and AICAR from PRFAR using the ammonia provided by the HisH subunit. The chain is Putative imidazole glycerol phosphate synthase subunit hisF2 (hisF2) from Pseudomonas aeruginosa (strain ATCC 15692 / DSM 22644 / CIP 104116 / JCM 14847 / LMG 12228 / 1C / PRS 101 / PAO1).